The chain runs to 650 residues: Acetyl-coenzyme A synthetase (650 aa).

CoA is bound by residues 191–194, T311, and N335; that span reads RGGR. Residues 387-389, 411-416, D500, and R515 contribute to the ATP site; these read GEP and DTWWQT. Residue S523 participates in CoA binding. R526 provides a ligand contact to ATP. 3 residues coordinate Mg(2+): V537, H539, and V542. R584 contacts CoA. An N6-acetyllysine modification is found at K609.

This sequence belongs to the ATP-dependent AMP-binding enzyme family. Mg(2+) is required as a cofactor. Acetylated. Deacetylation by the SIR2-homolog deacetylase activates the enzyme.

The enzyme catalyses acetate + ATP + CoA = acetyl-CoA + AMP + diphosphate. Functionally, catalyzes the conversion of acetate into acetyl-CoA (AcCoA), an essential intermediate at the junction of anabolic and catabolic pathways. AcsA undergoes a two-step reaction. In the first half reaction, AcsA combines acetate with ATP to form acetyl-adenylate (AcAMP) intermediate. In the second half reaction, it can then transfer the acetyl group from AcAMP to the sulfhydryl group of CoA, forming the product AcCoA. The chain is Acetyl-coenzyme A synthetase from Shewanella sp. (strain ANA-3).